The sequence spans 155 residues: Trypsin/factor XIIA inhibitor (155 aa).

An N-terminal signal peptide occupies residues 1–28 (MASSSSSSHRRLILAAAVLLSVLAAASA). Disulfide bonds link Cys34-Cys83, Cys48-Cys72, Cys57-Cys114, Cys73-Cys132, and Cys85-Cys143. Arg62 is an active-site residue. A propeptide spans 139 to 155 (GVAECPWILGGGTMPSK) (C-terminal peptide).

It belongs to the protease inhibitor I6 (cereal trypsin/alpha-amylase inhibitor) family. In terms of assembly, monomer.

Its subcellular location is the secreted. Potent inhibitor of mammalian trypsin and a specific inhibitor of factor XIIa (activated hageman factor). This chain is Trypsin/factor XIIA inhibitor, found in Zea mays (Maize).